Consider the following 210-residue polypeptide: Probable molybdenum cofactor guanylyltransferase (210 aa).

Residues 18–20, Lys31, Asn59, Asp86, and Asp111 contribute to the GTP site; that span reads LAG. Mg(2+) is bound at residue Asp111.

Belongs to the MobA family. The cofactor is Mg(2+).

It localises to the cytoplasm. It carries out the reaction Mo-molybdopterin + GTP + H(+) = Mo-molybdopterin guanine dinucleotide + diphosphate. Transfers a GMP moiety from GTP to Mo-molybdopterin (Mo-MPT) cofactor (Moco or molybdenum cofactor) to form Mo-molybdopterin guanine dinucleotide (Mo-MGD) cofactor. The polypeptide is Probable molybdenum cofactor guanylyltransferase (nasC) (Haloferax mediterranei (strain ATCC 33500 / DSM 1411 / JCM 8866 / NBRC 14739 / NCIMB 2177 / R-4) (Halobacterium mediterranei)).